We begin with the raw amino-acid sequence, 552 residues long: Glutamine-dependent NAD(+) synthetase (552 aa).

The region spanning 11-253 (LRIAMAQFDF…DQWLVVDYAA (243 aa)) is the CN hydrolase domain. Residue E52 is the Proton acceptor; for glutaminase activity of the active site. K119 functions as the For glutaminase activity in the catalytic mechanism. Y125 is an L-glutamine binding site. C157 serves as the catalytic Nucleophile; for glutaminase activity. Residues S183 and K189 each coordinate L-glutamine. The interval 275-552 (AWRAVVRGLK…YPITNGYSGQ (278 aa)) is ligase. 298–305 (GLSGGIDS) lines the ATP pocket. N381 serves as a coordination point for deamido-NAD(+). Residue T405 coordinates ATP. Residues E410 and K522 each contribute to the deamido-NAD(+) site.

In the C-terminal section; belongs to the NAD synthetase family.

It carries out the reaction deamido-NAD(+) + L-glutamine + ATP + H2O = L-glutamate + AMP + diphosphate + NAD(+) + H(+). The protein operates within cofactor biosynthesis; NAD(+) biosynthesis; NAD(+) from deamido-NAD(+) (L-Gln route): step 1/1. Its function is as follows. Catalyzes the ATP-dependent amidation of deamido-NAD to form NAD. Uses L-glutamine as a nitrogen source. In Xanthomonas campestris pv. campestris (strain 8004), this protein is Glutamine-dependent NAD(+) synthetase.